The following is a 257-amino-acid chain: Zinc finger protein 8 (257 aa).

Disordered stretches follow at residues 48–92 (GDNS…NNNN), 108–128 (QALGGHQNAHKRERQHAKRGS), and 214–238 (GVYSSSPASAFRSHEQETNKEPNNW). The segment covering 50 to 65 (NSDNLSAEPSDHQTTT) has biased composition (polar residues). The segment covering 66-92 (KNDESSENIKDKDKEKDKDKDKDNNNN) has biased composition (basic and acidic residues). A C2H2-type zinc finger spans residues 95–117 (FECHYCFRNFPTSQALGGHQNAH). A compositionally biased stretch (basic residues) spans 115 to 126 (NAHKRERQHAKR).

In terms of tissue distribution, expressed in developing cauline leaves.

The protein localises to the nucleus. Functionally, probable transcription factor required for the initiation of inflorescence trichomes in response to gibberellin and cytokinin. Is not involved in the regulation of trichome branching. Is functionally equivalent to GIS2. Acts as a negative regulator of abscisic acid (ABA) signaling during germination and early seedling development. The protein is Zinc finger protein 8 of Arabidopsis thaliana (Mouse-ear cress).